We begin with the raw amino-acid sequence, 186 residues long: TATA box-binding protein-like 1 (186 aa).

It belongs to the TBP family.

Its subcellular location is the cytoplasm. The protein localises to the nucleus. Part of a specialized transcription system that mediates the transcription of most ribosomal proteins through the 5'-TCT-3' motif which is a core promoter element at these genes. Seems to also mediate the transcription of NF1. Does not bind the TATA box. Members of the TBP family are differentially required to regulate transcription and development during early embryogenesis. Particularly regulates genes that have a role in catabolism. In Xenopus tropicalis (Western clawed frog), this protein is TATA box-binding protein-like 1 (tbpl1).